We begin with the raw amino-acid sequence, 66 residues long: Venom peptide CtAPI (66 aa).

Disulfide bonds link cysteine 7-cysteine 44, cysteine 16-cysteine 40, cysteine 20-cysteine 33, cysteine 24-cysteine 64, and cysteine 46-cysteine 58. The 58-residue stretch at 7–64 (CEKDEEFVNCAPRCPQNCRNIRSYQPCLVLTPVCAPGCVCRSGKVKNDRGDCVSITDC) folds into the TIL domain.

Belongs to the serine protease inhibitor-like (TIL domain-containing) family. As to expression, expressed by the venom gland.

The protein localises to the secreted. Functionally, serine protease inhibitor. This chain is Venom peptide CtAPI, found in Chaerilus tricostatus (Scorpion).